The sequence spans 92 residues: Small ribosomal subunit protein uS19 (92 aa).

Belongs to the universal ribosomal protein uS19 family.

Its function is as follows. Protein S19 forms a complex with S13 that binds strongly to the 16S ribosomal RNA. The sequence is that of Small ribosomal subunit protein uS19 from Proteus mirabilis (strain HI4320).